A 208-amino-acid chain; its full sequence is Small ribosomal subunit protein uS4 (208 aa).

A disordered region spans residues 29–48 (MERRPYGPGQHGRARRKQDS). One can recognise an S4 RNA-binding domain in the interval 95 to 155 (QRLDALVLRA…ERSEKMVPFQ (61 aa)).

It belongs to the universal ribosomal protein uS4 family. In terms of assembly, part of the 30S ribosomal subunit. Contacts protein S5. The interaction surface between S4 and S5 is involved in control of translational fidelity.

In terms of biological role, one of the primary rRNA binding proteins, it binds directly to 16S rRNA where it nucleates assembly of the body of the 30S subunit. Functionally, with S5 and S12 plays an important role in translational accuracy. The polypeptide is Small ribosomal subunit protein uS4 (Micrococcus luteus (strain ATCC 4698 / DSM 20030 / JCM 1464 / CCM 169 / CCUG 5858 / IAM 1056 / NBRC 3333 / NCIMB 9278 / NCTC 2665 / VKM Ac-2230) (Micrococcus lysodeikticus)).